The sequence spans 387 residues: 4-hydroxy-3-methylbut-2-en-1-yl diphosphate synthase (flavodoxin) (387 aa).

Cys272, Cys275, Cys307, and Glu314 together coordinate [4Fe-4S] cluster.

It belongs to the IspG family. [4Fe-4S] cluster serves as cofactor.

The enzyme catalyses (2E)-4-hydroxy-3-methylbut-2-enyl diphosphate + oxidized [flavodoxin] + H2O + 2 H(+) = 2-C-methyl-D-erythritol 2,4-cyclic diphosphate + reduced [flavodoxin]. Its pathway is isoprenoid biosynthesis; isopentenyl diphosphate biosynthesis via DXP pathway; isopentenyl diphosphate from 1-deoxy-D-xylulose 5-phosphate: step 5/6. Converts 2C-methyl-D-erythritol 2,4-cyclodiphosphate (ME-2,4cPP) into 1-hydroxy-2-methyl-2-(E)-butenyl 4-diphosphate. This Granulibacter bethesdensis (strain ATCC BAA-1260 / CGDNIH1) protein is 4-hydroxy-3-methylbut-2-en-1-yl diphosphate synthase (flavodoxin).